Consider the following 161-residue polypeptide: Putative HTH-type transcriptional regulator MT1325 (161 aa).

The HTH rrf2-type domain maps to 2–132 (RMSAKAEYAV…EETTLADVAG (131 aa)).

This Mycobacterium tuberculosis (strain CDC 1551 / Oshkosh) protein is Putative HTH-type transcriptional regulator MT1325.